A 287-amino-acid chain; its full sequence is ATP synthase gamma chain (287 aa).

Belongs to the ATPase gamma chain family. As to quaternary structure, F-type ATPases have 2 components, CF(1) - the catalytic core - and CF(0) - the membrane proton channel. CF(1) has five subunits: alpha(3), beta(3), gamma(1), delta(1), epsilon(1). CF(0) has three main subunits: a, b and c.

The protein localises to the cell inner membrane. Its function is as follows. Produces ATP from ADP in the presence of a proton gradient across the membrane. The gamma chain is believed to be important in regulating ATPase activity and the flow of protons through the CF(0) complex. The sequence is that of ATP synthase gamma chain from Geotalea daltonii (strain DSM 22248 / JCM 15807 / FRC-32) (Geobacter daltonii).